The primary structure comprises 400 residues: Phosphoglycerate kinase (400 aa).

Substrate contacts are provided by residues 22–24 (DLN), arginine 37, 60–63 (HLGR), arginine 119, and arginine 159. Residues lysine 209, glycine 297, glutamate 328, and 354–357 (GGDS) each bind ATP.

This sequence belongs to the phosphoglycerate kinase family. Monomer.

The protein localises to the cytoplasm. It catalyses the reaction (2R)-3-phosphoglycerate + ATP = (2R)-3-phospho-glyceroyl phosphate + ADP. Its pathway is carbohydrate degradation; glycolysis; pyruvate from D-glyceraldehyde 3-phosphate: step 2/5. This is Phosphoglycerate kinase from Saccharopolyspora erythraea (strain ATCC 11635 / DSM 40517 / JCM 4748 / NBRC 13426 / NCIMB 8594 / NRRL 2338).